The primary structure comprises 255 residues: Geranylgeranylglyceryl phosphate synthase (255 aa).

2 residues coordinate Mg(2+): D34 and T64. Sn-glycerol 1-phosphate contacts are provided by residues 182–188 (YLEAGSG), 213–214 (GG), and 235–236 (GN).

It belongs to the GGGP/HepGP synthase family. Group II subfamily. Mg(2+) is required as a cofactor.

Its subcellular location is the cytoplasm. The enzyme catalyses sn-glycerol 1-phosphate + (2E,6E,10E)-geranylgeranyl diphosphate = sn-3-O-(geranylgeranyl)glycerol 1-phosphate + diphosphate. Its pathway is membrane lipid metabolism; glycerophospholipid metabolism. Prenyltransferase that catalyzes the transfer of the geranylgeranyl moiety of geranylgeranyl diphosphate (GGPP) to the C3 hydroxyl of sn-glycerol-1-phosphate (G1P). This reaction is the first ether-bond-formation step in the biosynthesis of archaeal membrane lipids. This chain is Geranylgeranylglyceryl phosphate synthase, found in Saccharolobus islandicus (strain M.14.25 / Kamchatka #1) (Sulfolobus islandicus).